Reading from the N-terminus, the 413-residue chain is Cyclic AMP-dependent transcription factor ATF-7 (413 aa).

The segment at 1 to 285 (MGDDRPFVCS…GMVVGTASTM (285 aa)) is transactivation domain. The C2H2-type zinc finger occupies 7 to 31 (FVCSAPGCGQRFTNEDHLAVHKHKH). Position 51 is a phosphothreonine; by MAPK11 (Thr-51). Thr-53 and Thr-101 each carry phosphothreonine. 2 disordered regions span residues 81 to 140 (ASDD…TTKP) and 299 to 337 (HPDA…RRQR). Residue Lys-107 forms a Glycyl lysine isopeptide (Lys-Gly) (interchain with G-Cter in SUMO1) linkage. Low complexity-rich tracts occupy residues 114 to 126 (VDSS…ASSP) and 307 to 320 (QPQV…PSTG). Positions 326-337 (TVDEDPDERRQR) are enriched in basic and acidic residues. Residues 332–395 (DERRQRFLER…AQLKQLLLAH (64 aa)) form the bZIP domain. The segment at 334–354 (RRQRFLERNRAAASRCRQKRK) is basic motif. Residues 360 to 388 (LEKKAEELTSQNIQLSNEVTLLRNEVAQL) form a leucine-zipper region.

This sequence belongs to the bZIP family. Homodimer; binds DNA as homodimer. Heterodimer; heterodimerizes with other members of ATF family and with JUN family members. Interacts with JNK2; the interaction does not phosphorylate ATF7 but acts as a docking site for other ATF-associated partners such as JUN family members. Interacts (via its transactivation domain) with TAF12 the interaction potentiates the transactivation activity and is inhibited by ATF7 sumoylation. Interacts with TAF4; the interaction inhibits the TAF12-dependent transactivation. Interacts with MAPK9; the interaction does not phosphorylate ATF7 but acts as a docking site for ATF7-associated partners such as JUN. Interacts with Ku complex components XRCC6 and XRCC7. Interacts with TERT. Post-translationally, on EGF stimulation, phosphorylated first on Thr-53 allowing subsequent phosphorylation on Thr-51. This latter phosphorylation prevents sumoylation, increases binding to TAF12 and enhances transcriptional activity. Social isolation stress as well as TNF-alpha also induce the phosphorylation of ATF7. Phosphorylated in proliferating colonic and small intestinal epithelial cells. In terms of processing, sumoylation delays nuclear localization and inhibits transactivation activity through preventing binding to TAF12. RANBP2 appears to be the specific E3 ligase.

The protein resides in the nucleus. It localises to the nucleoplasm. It is found in the chromosome. Its subcellular location is the telomere. Its function is as follows. Stress-responsive chromatin regulator that plays a role in various biological processes including innate immunological memory, adipocyte differentiation or telomerase regulation. In absence of stress, contributes to the formation of heterochromatin and heterochromatin-like structure by recruiting histone H3K9 tri- and di-methyltransferases thus silencing the transcription of target genes such as Htr5b, STAT1 in adipocytes, or genes involved in innate immunity in macrophages and adipocytes. Phosphorylation of ATF7 disrupts interactions with histone methyltransferase and enhances the association with coactivators containing histone acetyltransferase and/or histone demethylase, leading to disruption of the heterochromatin-like structure and subsequently transcriptional activation. In response to TNF-alpha, which is induced by various stresses, phosphorylated ATF7 and telomerase are released from telomeres leading to telomere shortening. Also plays a role in maintaining epithelial regenerative capacity and protecting against cell death during intestinal epithelial damage and repair. The protein is Cyclic AMP-dependent transcription factor ATF-7 (Atf7) of Mus musculus (Mouse).